The primary structure comprises 569 residues: Protein Noxp20 (569 aa).

3 disordered regions span residues Met1–Thr87, Gly102–Arg126, and Ala165–Gly208. A Phosphothreonine modification is found at Thr197. Ser262 is subject to Phosphoserine. Positions Val404–Lys439 are disordered.

Belongs to the FAM114 family. In terms of tissue distribution, over-expressed in brain. Also detected in lung, stomach, and in a lower extent in testis and thymus.

The protein resides in the cytoplasm. May play a role in neuronal cell development. The sequence is that of Protein Noxp20 (Fam114a1) from Mus musculus (Mouse).